Consider the following 452-residue polypeptide: Tryptophan biosynthesis protein TrpCF (452 aa).

The segment at 1 to 253 is indole-3-glycerol phosphate synthase; the sequence is MPSVLENILK…KACIKLILGE (253 aa). An N-(5'-phosphoribosyl)anthranilate isomerase region spans residues 254-448; it reads NKVCGLTRIK…KDKIKQLARI (195 aa).

This sequence in the N-terminal section; belongs to the TrpC family. In the C-terminal section; belongs to the TrpF family.

The enzyme catalyses N-(5-phospho-beta-D-ribosyl)anthranilate = 1-(2-carboxyphenylamino)-1-deoxy-D-ribulose 5-phosphate. It catalyses the reaction 1-(2-carboxyphenylamino)-1-deoxy-D-ribulose 5-phosphate + H(+) = (1S,2R)-1-C-(indol-3-yl)glycerol 3-phosphate + CO2 + H2O. It functions in the pathway amino-acid biosynthesis; L-tryptophan biosynthesis; L-tryptophan from chorismate: step 3/5. Its pathway is amino-acid biosynthesis; L-tryptophan biosynthesis; L-tryptophan from chorismate: step 4/5. Its function is as follows. Bifunctional enzyme that catalyzes two sequential steps of tryptophan biosynthetic pathway. The first reaction is catalyzed by the isomerase, coded by the TrpF domain; the second reaction is catalyzed by the synthase, coded by the TrpC domain. This is Tryptophan biosynthesis protein TrpCF (trpC) from Helicobacter pylori (strain J99 / ATCC 700824) (Campylobacter pylori J99).